A 488-amino-acid chain; its full sequence is Probable glycine dehydrogenase (decarboxylating) subunit 2 (488 aa).

Lys-274 is subject to N6-(pyridoxal phosphate)lysine.

The protein belongs to the GcvP family. C-terminal subunit subfamily. In terms of assembly, the glycine cleavage system is composed of four proteins: P, T, L and H. In this organism, the P 'protein' is a heterodimer of two subunits. Pyridoxal 5'-phosphate serves as cofactor.

It catalyses the reaction N(6)-[(R)-lipoyl]-L-lysyl-[glycine-cleavage complex H protein] + glycine + H(+) = N(6)-[(R)-S(8)-aminomethyldihydrolipoyl]-L-lysyl-[glycine-cleavage complex H protein] + CO2. The glycine cleavage system catalyzes the degradation of glycine. The P protein binds the alpha-amino group of glycine through its pyridoxal phosphate cofactor; CO(2) is released and the remaining methylamine moiety is then transferred to the lipoamide cofactor of the H protein. In Listeria monocytogenes serotype 4b (strain F2365), this protein is Probable glycine dehydrogenase (decarboxylating) subunit 2.